The sequence spans 139 residues: Immunogenic miracidial antigen 8I (139 aa).

The disordered stretch occupies residues 61 to 139 (IDVGDEDYHD…PKKYGSGYKH (79 aa)). Residues 64–85 (GDEDYHDGDDDVDYTDDVDDVD) are compositionally biased toward acidic residues. Polar residues predominate over residues 90–103 (SPSQLLQGGYQRNQ).

It belongs to the immunogenic miracidial antigen family.

The protein is Immunogenic miracidial antigen 8I (8I) of Schistosoma japonicum (Blood fluke).